The primary structure comprises 201 residues: Ribonuclease HII (201 aa).

One can recognise an RNase H type-2 domain in the interval 15–201; that stretch reads AIIAGVDEAG…FAPIKAYGAP (187 aa). Aspartate 21, glutamate 22, and aspartate 113 together coordinate a divalent metal cation.

Belongs to the RNase HII family. Mn(2+) serves as cofactor. Requires Mg(2+) as cofactor.

The protein localises to the cytoplasm. It carries out the reaction Endonucleolytic cleavage to 5'-phosphomonoester.. Endonuclease that specifically degrades the RNA of RNA-DNA hybrids. This is Ribonuclease HII from Bordetella pertussis (strain Tohama I / ATCC BAA-589 / NCTC 13251).